A 620-amino-acid polypeptide reads, in one-letter code: Zinc finger protein GLIS1 (620 aa).

The segment at 108–132 (PLTGDLGGPSKRARPGPASTDSHEG) is disordered. A C2H2-type 1 zinc finger spans residues 195–220 (QACRWVDCCAAYEQQEELVRHIEKSH). A C2H2-type 2; atypical zinc finger spans residues 229–256 (FTCFWAGCVRRYKPFNARYKLLIHMRVH). C2H2-type zinc fingers lie at residues 262 to 286 (NKCM…LRSH), 292 to 316 (YLCQ…QRTH), and 322 to 346 (YACQ…VKAH). A Bipartite nuclear localization signal motif is present at residues 340–356 (RKHVKAHSAKEQQVRKK). The segment at 414–515 (ASGLLPPAHD…PPLPSPQGYQ (102 aa)) is disordered. The span at 477 to 488 (SSQSHSPGGQPF) shows a compositional bias: low complexity. The segment covering 489 to 510 (PTLPSKPSYPPFQSPPPPPLPS) has biased composition (pro residues).

This sequence belongs to the GLI C2H2-type zinc-finger protein family. In terms of assembly, interacts with KLF4. Interacts with POU5F1 and/or POU5F1B. Interacts with SOX2.

The protein localises to the nucleus. In terms of biological role, acts both as a repressor and an activator of transcription. Binds to the consensus sequence 5'-GACCACCCAC-3'. By controlling the expression of genes involved in cell differentiation inhibits the lineage commitment of multipotent cells. Prevents, for instance, the differentiation of multipotent mesenchymal cells into adipocyte and osteoblast. The polypeptide is Zinc finger protein GLIS1 (Homo sapiens (Human)).